A 667-amino-acid polypeptide reads, in one-letter code: MAAETLLSSLLGLLLLGLLLPASLTGGVGSLNLEELSEMRYGIEILPLPVMGGQSQSSDVVIVSSKYKQRYECRLPAGAIHFQREREEETPAYQGPGIPELLSPMRDAPCLLKTKDWWTYEFCYGRHIQQYHMEDSEIKGEVLYLGYYQSAFDWDDETAKASKQHRLKRYHSQTYGNGSKCDLNGRPREAEVRFLCDEGAGISGDYIDRVDEPLSCSYVLTIRTPRLCPHPLLRPPPSAAPQAILCHPSLQPEEYMAYVQRQADSKQYGDKIIEELQDLGPQVWSETKSGVAPQKMAGASPTKDDSKDSDFWKMLNEPEDQAPGGEEVPAEEQDPSPEAADSASGAPNDFQNNVQVKVIRSPADLIRFIEELKGGTKKGKPNIGQEQPVDDAAEVPQREPEKERGDPERQREMEEEEDEDEDEDEDEDERQLLGEFEKELEGILLPSDRDRLRSEVKAGMERELENIIQETEKELDPDGLKKESERDRAMLALTSTLNKLIKRLEEKQSPELVKKHKKKRVVPKKPPPSPQPTEEDPEHRVRVRVTKLRLGGPNQDLTVLEMKRENPQLKQIEGLVKELLEREGLTAAGKIEIKIVRPWAEGTEEGARWLTDEDTRNLKEIFFNILVPGAEEAQKERQRQKELESNYRRVWGSPGGEGTGDLDEFDF.

The N-terminal stretch at 1–25 is a signal peptide; that stretch reads MAAETLLSSLLGLLLLGLLLPASLT. The region spanning 108–230 is the MRH domain; that stretch reads APCLLKTKDW…TIRTPRLCPH (123 aa). Cys110 and Cys123 are joined by a disulfide. A mannooligosaccharide derivative-binding residues include Trp117, Trp118, and Gln130. A glycan (N-linked (GlcNAc...) asparagine) is linked at Asn177. 2 disulfide bridges follow: Cys181/Cys216 and Cys196/Cys228. Asp182, Arg188, Glu212, and Tyr218 together coordinate a mannooligosaccharide derivative. 5 disordered regions span residues 284 to 355, 372 to 452, 464 to 483, 504 to 540, and 633 to 667; these read WSET…NNVQ, LKGG…RDRL, LENI…LKKE, LEEK…PEHR, and AQKE…EFDF. 2 stretches are compositionally biased toward basic and acidic residues: residues 302–311 and 396–412; these read TKDDSKDSDF and PQRE…RQRE. The span at 413 to 429 shows a compositional bias: acidic residues; the sequence is MEEEEDEDEDEDEDEDE. The span at 430 to 452 shows a compositional bias: basic and acidic residues; it reads RQLLGEFEKELEGILLPSDRDRL. The span at 504–513 shows a compositional bias: basic and acidic residues; that stretch reads LEEKQSPELV. Basic residues predominate over residues 514-523; the sequence is KKHKKKRVVP. The span at 633–647 shows a compositional bias: basic and acidic residues; that stretch reads AQKERQRQKELESNY.

It belongs to the OS-9 family. Component of the HRD1 complex, which comprises at least SYNV1/HRD1, DERL1/2, FAM8A1, HERPUD1/HERP, OS9, SEL1L and UBE2J1. FAM8A1 is stabilized by interaction with SYNV1, which prevents its proteasomal degradation. OS9 and UBE2J1 recruitment to the complex may be mediated by SEL1L. Through this complex, may interact with ERLEC1 and HSPA5. Interacts (via C-terminus) with CPNE6 (via second C2 domain); this interaction occurs in a calcium-dependent manner in vitro. Interacts with CREB3. Post-translationally, intramolecular disulfide bonds. In terms of processing, isoform 1 and isoform 2 are N-glycosylated. In terms of tissue distribution, ubiquitously expressed. Found as well in all tumor cell lines analyzed, amplified in sarcomas. Highly expressed in osteosarcoma SJSA-1 and rhabdomyosarcoma Rh30 cell lines. Isoform 2 is the major isoform detected in all cell types examined.

The protein resides in the endoplasmic reticulum lumen. In terms of biological role, lectin component of the HRD1 complex, which functions in endoplasmic reticulum (ER) quality control and ER-associated degradation (ERAD). Specifically recognizes and binds improperly folded glycoproteins as well as hyperglycosylated proteins, retain them in the ER, and transfers them to the ubiquitination machinery and promote their degradation. Possible targets include TRPV4 as well as hyperglycosylated HSP90B1. The sequence is that of Protein OS-9 (OS9) from Homo sapiens (Human).